Reading from the N-terminus, the 206-residue chain is MVKIIGISGGSGSGKTTIVNKISEVISEFVLISQDNYYKSVGDYEYEFLDVNFDHPDAFDNNLFYKQLKKLKENQSINMPLYDFINHKRRDETIKIVPTPIIIVEGIMIFVEERVRNLIDLKIYIDTPNDIRFIRRLERDMSKRGRTLESVIEQYLRTTRAGYYRFIEPTKEYADLIIPEGGHNDKALYVLSSFLKTLVKDSSKFF.

9-16 serves as a coordination point for ATP; it reads GGSGSGKT.

Belongs to the uridine kinase family.

The protein resides in the cytoplasm. The enzyme catalyses uridine + ATP = UMP + ADP + H(+). The catalysed reaction is cytidine + ATP = CMP + ADP + H(+). It participates in pyrimidine metabolism; CTP biosynthesis via salvage pathway; CTP from cytidine: step 1/3. The protein operates within pyrimidine metabolism; UMP biosynthesis via salvage pathway; UMP from uridine: step 1/1. This Borrelia duttonii (strain Ly) protein is Uridine kinase.